Consider the following 846-residue polypeptide: Protein kintoun (846 aa).

4 disordered regions span residues 1–21 (MSTAAGSRKKHSKLHNEERAD), 377–412 (DSGVELHSNSESPVEDDADGYMPETPELETAAPPDP), 581–657 (HTSI…DSTI), and 743–846 (HDSS…DDEI). Serine 378 is modified (phosphoserine). A compositionally biased stretch (low complexity) spans 399–408 (PETPELETAA). Composition is skewed to basic residues over residues 596-612 (LHKKPSKKQRKRNKKQR) and 750-766 (QRKKNQKRRNCKLRAQQ). Residue serine 770 is modified to Phosphoserine. Residues 821–832 (TRQDHADADAKN) show a composition bias toward basic and acidic residues.

This sequence belongs to the PIH1 family. Kintoun subfamily. As to quaternary structure, interacts with Pp1alpha-96A, Pp1-87B, Pp1-13C and flw.

It is found in the cytoplasm. Its function is as follows. Required for cytoplasmic pre-assembly of axonemal dyneins, thereby playing a central role in motility in cilia and flagella. Involved in pre-assembly of dynein arm complexes in the cytoplasm before intraflagellar transport loads them for the ciliary compartment. The protein is Protein kintoun of Drosophila pseudoobscura pseudoobscura (Fruit fly).